Reading from the N-terminus, the 179-residue chain is NADH-quinone oxidoreductase subunit B (179 aa).

Cysteine 35, cysteine 36, cysteine 100, and cysteine 129 together coordinate [4Fe-4S] cluster.

The protein belongs to the complex I 20 kDa subunit family. In terms of assembly, NDH-1 is composed of 14 different subunits. Subunits NuoB, C, D, E, F, and G constitute the peripheral sector of the complex. It depends on [4Fe-4S] cluster as a cofactor.

The protein localises to the cell inner membrane. The enzyme catalyses a quinone + NADH + 5 H(+)(in) = a quinol + NAD(+) + 4 H(+)(out). NDH-1 shuttles electrons from NADH, via FMN and iron-sulfur (Fe-S) centers, to quinones in the respiratory chain. Couples the redox reaction to proton translocation (for every two electrons transferred, four hydrogen ions are translocated across the cytoplasmic membrane), and thus conserves the redox energy in a proton gradient. The sequence is that of NADH-quinone oxidoreductase subunit B from Aquifex aeolicus (strain VF5).